We begin with the raw amino-acid sequence, 175 residues long: FMRFamide-like neuropeptides 1 (175 aa).

The N-terminal stretch at 1-21 is a signal peptide; sequence MTLLYQVGLLLLVAATYKVSA. Residues 22–68 constitute a propeptide that is removed on maturation; the sequence is ECCTPGATSDFCTVFSMLSTMEQNEVMNFIGENCDGDAEVALQKMEK. Tyr-76 is subject to Tyrosine amide. The propeptide occupies 79-86; the sequence is SAAVKSLG. Residues Phe-98, Phe-108, Phe-120, Phe-130, Phe-142, and Phe-154 each carry the phenylalanine amide modification. A propeptide spanning residues 157–165 is cleaved from the precursor; the sequence is SFDNFDRES. At Phe-173 the chain carries Phenylalanine amide.

The protein belongs to the FARP (FMRFamide related peptide) family. Post-translationally, may be processed by convertase egl-3. In terms of tissue distribution, each flp gene is expressed in a distinct set of neurons. Flp-1 is expressed in the AVA interneurons, the M5 cholinergic pharyngeal motoneurons, and the AIA, AIY, AVE, AVK, RIG and RMG neurons.

It localises to the secreted. Together with flp-18, plays a homeostatic role by acting on the GABAergic neural transmission at neuromuscular junctions to prevent overexcitation of the locomotor circuit. In terms of biological role, inhibits the activity of dissected pharyngeal myogenic muscle system. Functionally, DPNFLRF-amide: Inhibits the activity of dissected pharyngeal myogenic muscle system. Its function is as follows. Acts as a ligand for the npr-22 receptor in vitro. This Caenorhabditis elegans protein is FMRFamide-like neuropeptides 1 (flp-1).